The following is a 135-amino-acid chain: Large ribosomal subunit protein uL22 (135 aa).

The tract at residues 112–135 (KKPEKKKLKAKSAKTEEAPKAAEV) is disordered. Residues 124 to 135 (AKTEEAPKAAEV) are compositionally biased toward basic and acidic residues.

Belongs to the universal ribosomal protein uL22 family. As to quaternary structure, part of the 50S ribosomal subunit.

This protein binds specifically to 23S rRNA; its binding is stimulated by other ribosomal proteins, e.g. L4, L17, and L20. It is important during the early stages of 50S assembly. It makes multiple contacts with different domains of the 23S rRNA in the assembled 50S subunit and ribosome. Its function is as follows. The globular domain of the protein is located near the polypeptide exit tunnel on the outside of the subunit, while an extended beta-hairpin is found that lines the wall of the exit tunnel in the center of the 70S ribosome. This Brachyspira hyodysenteriae (strain ATCC 49526 / WA1) protein is Large ribosomal subunit protein uL22.